The primary structure comprises 627 residues: MSRDGGDVIETAVKSLGKGFDLTADFRLKYCKDGDGSAGDDRLVVLDQTQNRELHIPGFGVFQNVSADINCDKGERTRFRSDILDFNKMSEYFNQRSSVTGKIPSGNFNATFGFQSGSWATDAANVKSLGLDASVVTLFNLHIHNPNRLRLTDRVRNAVPSSWDPQLLARFIERYGTHVITGVSVGGQDVVVVRQDKSSDLDNDLLRHHLYDLGDQLFTGSCLLSTRRLNKAYHHSHSQPKFPEAFNVFDDKQTVAFNNFSINSQNGITVICAKRGGDGRAKSHSEWLITVPDKPDAINFNFIPITSLLKDVPGSGLLSHAMSLYLRYKPPLMDLQYFLDFSGPRAWAPVHNDLPFGAAPNMASAYPALHINFMGPKLYVNTTPVTSEKNPVTGMRFFLEGKKCNRLAIHLQHLDNTRTTVGEKITDEHIWRGSDQITDNDRYFEPLNGKKFSHVCTVPVKYDPNWIKTTSNHKSQNDVAFIVTGAQLEVKKHGSKSVLHLRLRYTKVSDHYVVQNSWVHGPIGTSQKSGIFSSMSMPLTSGSVHHNMIQKDKNEVVLDSGVFPGGPPVPANNKIVKFVDLSQLCRGPQHSPGHWLVTGVRLYLDKGKLCLHVKFALLHRQRLLVSS.

Residues 1–339 (MSRDGGDVIE…PPLMDLQYFL (339 aa)) form the MACPF domain.

Belongs to the complement C6/C7/C8/C9 (TC 1.C.39) family.

Negatively controls the salicylic acid (SA)-mediated pathway of programmed cell death in plant immunity. The polypeptide is MACPF domain-containing protein At1g14780 (Arabidopsis thaliana (Mouse-ear cress)).